A 360-amino-acid chain; its full sequence is Aminomethyltransferase (360 aa).

Belongs to the GcvT family. In terms of assembly, the glycine cleavage system is composed of four proteins: P, T, L and H.

It catalyses the reaction N(6)-[(R)-S(8)-aminomethyldihydrolipoyl]-L-lysyl-[protein] + (6S)-5,6,7,8-tetrahydrofolate = N(6)-[(R)-dihydrolipoyl]-L-lysyl-[protein] + (6R)-5,10-methylene-5,6,7,8-tetrahydrofolate + NH4(+). The glycine cleavage system catalyzes the degradation of glycine. This is Aminomethyltransferase from Pseudomonas syringae pv. tomato (strain ATCC BAA-871 / DC3000).